The primary structure comprises 192 residues: Imidazoleglycerol-phosphate dehydratase (192 aa).

The protein belongs to the imidazoleglycerol-phosphate dehydratase family.

The protein resides in the cytoplasm. It catalyses the reaction D-erythro-1-(imidazol-4-yl)glycerol 3-phosphate = 3-(imidazol-4-yl)-2-oxopropyl phosphate + H2O. It participates in amino-acid biosynthesis; L-histidine biosynthesis; L-histidine from 5-phospho-alpha-D-ribose 1-diphosphate: step 6/9. In Hydrogenobaculum sp. (strain Y04AAS1), this protein is Imidazoleglycerol-phosphate dehydratase.